The primary structure comprises 218 residues: Large ribosomal subunit protein uL3 (218 aa).

Belongs to the universal ribosomal protein uL3 family. In terms of assembly, part of the 50S ribosomal subunit. Forms a cluster with proteins L14 and L19.

In terms of biological role, one of the primary rRNA binding proteins, it binds directly near the 3'-end of the 23S rRNA, where it nucleates assembly of the 50S subunit. This chain is Large ribosomal subunit protein uL3, found in Brachyspira pilosicoli (Serpulina pilosicoli).